The chain runs to 442 residues: Coiled-coil domain-containing protein 91 (442 aa).

Positions 1–16 (MDDDDFGGFEAAETFD) are GGA1-binding motif. A disordered region spans residues 1-27 (MDDDDFGGFEAAETFDGEQGGNQAVSP). 2 positions are modified to phosphoserine: S43 and S46. Disordered stretches follow at residues 48–80 (ELIL…ADSS) and 114–134 (HGAL…SNSQ). Coiled-coil stretches lie at residues 130-210 (VSNS…GHEA), 253-318 (HAQH…MKDV), and 346-408 (ARDQ…RRLD). The segment at 211–414 (LSIIVDEYKA…RRLDQVTRQR (204 aa)) is homodimerization.

In terms of assembly, homodimer. Interacts with GGA1, GGA2 and AP1G1.

Its subcellular location is the membrane. The protein localises to the golgi apparatus. The protein resides in the trans-Golgi network membrane. It localises to the trans-Golgi network. In terms of biological role, involved in the regulation of membrane traffic through the trans-Golgi network (TGN). Functions in close cooperation with the GGAs in the sorting of hydrolases to lysosomes. The chain is Coiled-coil domain-containing protein 91 (Ccdc91) from Mus musculus (Mouse).